Reading from the N-terminus, the 105-residue chain is Protein U4 (105 aa).

A helical membrane pass occupies residues 5–25 (FLLFLLLLVLVINPSLVVNMV).

The protein belongs to the nanovirus U4 protein family.

The protein resides in the membrane. The sequence is that of Protein U4 (DNA-U4) from Faba bean necrotic yellows virus (isolate Egyptian EV1-93) (FBNYV).